Reading from the N-terminus, the 329-residue chain is 4-hydroxythreonine-4-phosphate dehydrogenase (329 aa).

Substrate contacts are provided by H136 and T137. Residues H166, H211, and H266 each contribute to the a divalent metal cation site. Residues K274, N283, and R292 each coordinate substrate.

The protein belongs to the PdxA family. As to quaternary structure, homodimer. It depends on Zn(2+) as a cofactor. Mg(2+) is required as a cofactor. Requires Co(2+) as cofactor.

It localises to the cytoplasm. It carries out the reaction 4-(phosphooxy)-L-threonine + NAD(+) = 3-amino-2-oxopropyl phosphate + CO2 + NADH. Its pathway is cofactor biosynthesis; pyridoxine 5'-phosphate biosynthesis; pyridoxine 5'-phosphate from D-erythrose 4-phosphate: step 4/5. In terms of biological role, catalyzes the NAD(P)-dependent oxidation of 4-(phosphooxy)-L-threonine (HTP) into 2-amino-3-oxo-4-(phosphooxy)butyric acid which spontaneously decarboxylates to form 3-amino-2-oxopropyl phosphate (AHAP). The protein is 4-hydroxythreonine-4-phosphate dehydrogenase of Neisseria meningitidis serogroup B (strain ATCC BAA-335 / MC58).